A 568-amino-acid chain; its full sequence is Sulfite reductase [NADPH] hemoprotein beta-component (568 aa).

[4Fe-4S] cluster-binding residues include cysteine 425, cysteine 431, cysteine 470, and cysteine 474. Siroheme is bound at residue cysteine 474.

The protein belongs to the nitrite and sulfite reductase 4Fe-4S domain family. As to quaternary structure, alpha(8)-beta(8). The alpha component is a flavoprotein, the beta component is a hemoprotein. Requires siroheme as cofactor. It depends on [4Fe-4S] cluster as a cofactor.

It carries out the reaction hydrogen sulfide + 3 NADP(+) + 3 H2O = sulfite + 3 NADPH + 4 H(+). It participates in sulfur metabolism; hydrogen sulfide biosynthesis; hydrogen sulfide from sulfite (NADPH route): step 1/1. Its function is as follows. Component of the sulfite reductase complex that catalyzes the 6-electron reduction of sulfite to sulfide. This is one of several activities required for the biosynthesis of L-cysteine from sulfate. This chain is Sulfite reductase [NADPH] hemoprotein beta-component, found in Xanthomonas euvesicatoria pv. vesicatoria (strain 85-10) (Xanthomonas campestris pv. vesicatoria).